The sequence spans 711 residues: Ferric reductase transmembrane component 3 (711 aa).

An N-terminal signal peptide occupies residues 1-20; the sequence is MYWVLLCGSILLCCLSGASA. The Extracellular segment spans residues 21 to 166; it reads SPAKTKMYGK…YANYDIGHTY (146 aa). Residues asparagine 85, asparagine 108, asparagine 120, and asparagine 134 are each glycosylated (N-linked (GlcNAc...) asparagine). The chain crosses the membrane as a helical span at residues 167 to 187; sequence GGIICAYFVGVMILASILHYL. Topologically, residues 188–237 are cytoplasmic; the sequence is SYTPFKTALFKQRLVRYVRRYLTIPTIWGKHASSFSYLKIFTGFLPTRSE. Residues 238–258 traverse the membrane as a helical segment; it reads GVIILGYLVLHTVFLAYGYQY. Topologically, residues 259–280 are extracellular; sequence DPYNLIFDSRREQIARYVADRS. Positions 280–414 constitute a Ferric oxidoreductase domain; it reads SGVLAFAHFP…SGIEWIYAAI (135 aa). The helical transmembrane segment at 281–301 threads the bilayer; the sequence is GVLAFAHFPLIALFAGRNNFL. Residues 302–321 lie on the Cytoplasmic side of the membrane; sequence EFISGVKYTSFIMFHKWLGR. Positions 316 and 330 each coordinate heme. Residues 322–341 traverse the membrane as a helical segment; it reads MMFLDAVIHGAAYTSYSVFY. At 342 to 353 the chain is on the extracellular side; the sequence is KDWAASKEETYW. The helical transmembrane segment at 354–374 threads the bilayer; the sequence is QFGVAALCIVGVMVFFSLAMF. The Cytoplasmic portion of the chain corresponds to 375–376; that stretch reads RK. Residues 377 to 397 form a helical membrane-spanning segment; it reads FFYEAFLFLHIVLGALFFYTC. Histidine 386 contacts heme. Tryptophan 398 is a topological domain (extracellular). Residues 399–419 traverse the membrane as a helical segment; it reads EHVVELSGIEWIYAAIAIWTI. Histidine 400 is a heme binding site. In terms of domain architecture, FAD-binding FR-type spans 415–534; the sequence is AIWTIDRLIR…EGPYGSSSPV (120 aa). Residues 420–711 are Cytoplasmic-facing; sequence DRLIRIVRVS…IEYFEEYQSW (292 aa). Position 479-485 (479-485) interacts with FAD; the sequence is HPFTVLD. NADP(+)-binding positions include 526-529 and 677-678; these read GPYG and CG.

Belongs to the ferric reductase (FRE) family. Requires FAD as cofactor. It depends on heme as a cofactor.

The protein localises to the cell membrane. The catalysed reaction is 2 a Fe(II)-siderophore + NADP(+) + H(+) = 2 a Fe(III)-siderophore + NADPH. Its function is as follows. Siderophore-iron reductase responsible for reducing extracellular iron prior to import. Catalyzes the reductive uptake of Fe(3+) bound to di- and trihydroxamate siderophores. Fe(3+) is reduced to Fe(2+), which then dissociates from the siderophore and can be imported by the high-affinity Fe(2+) transport complex in the plasma membrane. This Saccharomyces cerevisiae (strain ATCC 204508 / S288c) (Baker's yeast) protein is Ferric reductase transmembrane component 3 (FRE3).